The following is a 139-amino-acid chain: D-ribose pyranase (139 aa).

His20 (proton donor) is an active-site residue. Substrate-binding positions include Asp28, His106, and 128–130 (YAN).

It belongs to the RbsD / FucU family. RbsD subfamily. In terms of assembly, homodecamer.

The protein resides in the cytoplasm. The enzyme catalyses beta-D-ribopyranose = beta-D-ribofuranose. It participates in carbohydrate metabolism; D-ribose degradation; D-ribose 5-phosphate from beta-D-ribopyranose: step 1/2. In terms of biological role, catalyzes the interconversion of beta-pyran and beta-furan forms of D-ribose. This chain is D-ribose pyranase, found in Salmonella choleraesuis (strain SC-B67).